A 330-amino-acid chain; its full sequence is Small ribosomal subunit protein mS35 (330 aa).

Residues 50–73 (AAGKGVRGQMKPRRQAGEPRTERM) form a disordered region. The segment covering 64–73 (QAGEPRTERM) has biased composition (basic and acidic residues).

The protein belongs to the mitochondrion-specific ribosomal protein mS35 family. As to quaternary structure, component of the mitochondrial ribosome small subunit (28S) which comprises a 12S rRNA and about 30 distinct proteins.

Its subcellular location is the mitochondrion. The protein is Small ribosomal subunit protein mS35 (mrps35) of Danio rerio (Zebrafish).